Here is a 341-residue protein sequence, read N- to C-terminus: L-threonine 3-dehydrogenase (341 aa).

C38 contacts Zn(2+). Residues T40 and H43 each act as charge relay system in the active site. Residues H63, E64, C93, C96, C99, and C107 each coordinate Zn(2+). NAD(+) contacts are provided by residues I175, D195, R200, 262 to 264 (LGI), and 286 to 287 (IY).

This sequence belongs to the zinc-containing alcohol dehydrogenase family. Homotetramer. Requires Zn(2+) as cofactor.

Its subcellular location is the cytoplasm. It catalyses the reaction L-threonine + NAD(+) = (2S)-2-amino-3-oxobutanoate + NADH + H(+). It functions in the pathway amino-acid degradation; L-threonine degradation via oxydo-reductase pathway; glycine from L-threonine: step 1/2. Catalyzes the NAD(+)-dependent oxidation of L-threonine to 2-amino-3-ketobutyrate. The polypeptide is L-threonine 3-dehydrogenase (Colwellia psychrerythraea (strain 34H / ATCC BAA-681) (Vibrio psychroerythus)).